An 885-amino-acid polypeptide reads, in one-letter code: Alanine--tRNA ligase (885 aa).

The Zn(2+) site is built by His-564, His-568, Cys-676, and His-680.

It belongs to the class-II aminoacyl-tRNA synthetase family. Zn(2+) serves as cofactor.

It is found in the cytoplasm. It carries out the reaction tRNA(Ala) + L-alanine + ATP = L-alanyl-tRNA(Ala) + AMP + diphosphate. In terms of biological role, catalyzes the attachment of alanine to tRNA(Ala) in a two-step reaction: alanine is first activated by ATP to form Ala-AMP and then transferred to the acceptor end of tRNA(Ala). Also edits incorrectly charged Ser-tRNA(Ala) and Gly-tRNA(Ala) via its editing domain. The protein is Alanine--tRNA ligase of Brucella ovis (strain ATCC 25840 / 63/290 / NCTC 10512).